A 346-amino-acid polypeptide reads, in one-letter code: NADPH dehydrogenase (346 aa).

Position 23 to 26 (23 to 26) interacts with FMN; sequence SPMC. Tyr-28 contacts substrate. FMN is bound by residues Ala-60 and Gln-102. 164 to 167 contributes to the substrate binding site; the sequence is HGAH. Residues Arg-215 and 307–308 contribute to the FMN site; that span reads GR.

This sequence belongs to the NADH:flavin oxidoreductase/NADH oxidase family. NamA subfamily. Homotetramer. Requires FMN as cofactor.

The catalysed reaction is A + NADPH + H(+) = AH2 + NADP(+). In terms of biological role, catalyzes the reduction of the double bond of an array of alpha,beta-unsaturated aldehydes and ketones. It also reduces the nitro group of nitroester and nitroaromatic compounds. It could have a role in detoxification processes. This Bacillus cytotoxicus (strain DSM 22905 / CIP 110041 / 391-98 / NVH 391-98) protein is NADPH dehydrogenase.